A 40-amino-acid polypeptide reads, in one-letter code: Snaclec LmrLEC-1 (40 aa).

A disulfide bridge connects residues cysteine 2 and cysteine 13.

This sequence belongs to the snaclec family. In terms of assembly, dimer (non-covalently linked) of heterodimers of subunits alpha and beta (disulfide-linked). As to expression, expressed by the venom gland.

Its subcellular location is the secreted. Functionally, interferes with one step of hemostasis (modulation of platelet aggregation, or coagulation cascade, for example). This is Snaclec LmrLEC-1 from Lachesis muta rhombeata (Bushmaster).